We begin with the raw amino-acid sequence, 95 residues long: Aspartyl/glutamyl-tRNA(Asn/Gln) amidotransferase subunit C (95 aa).

It belongs to the GatC family. Heterotrimer of A, B and C subunits.

It carries out the reaction L-glutamyl-tRNA(Gln) + L-glutamine + ATP + H2O = L-glutaminyl-tRNA(Gln) + L-glutamate + ADP + phosphate + H(+). The catalysed reaction is L-aspartyl-tRNA(Asn) + L-glutamine + ATP + H2O = L-asparaginyl-tRNA(Asn) + L-glutamate + ADP + phosphate + 2 H(+). Functionally, allows the formation of correctly charged Asn-tRNA(Asn) or Gln-tRNA(Gln) through the transamidation of misacylated Asp-tRNA(Asn) or Glu-tRNA(Gln) in organisms which lack either or both of asparaginyl-tRNA or glutaminyl-tRNA synthetases. The reaction takes place in the presence of glutamine and ATP through an activated phospho-Asp-tRNA(Asn) or phospho-Glu-tRNA(Gln). The protein is Aspartyl/glutamyl-tRNA(Asn/Gln) amidotransferase subunit C of Pelobacter propionicus (strain DSM 2379 / NBRC 103807 / OttBd1).